The following is a 346-amino-acid chain: Glycosyltransferase 1 domain-containing protein 1 (346 aa).

An N-terminal signal peptide occupies residues 1–16 (MRLLFLAVLRPHTGNA).

This sequence belongs to the glycosyltransferase group 1 family. Glycosyltransferase 4 subfamily.

It localises to the secreted. This chain is Glycosyltransferase 1 domain-containing protein 1 (GLT1D1), found in Pongo abelii (Sumatran orangutan).